A 456-amino-acid chain; its full sequence is Enolase (456 aa).

Glutamine 164 is a binding site for (2R)-2-phosphoglycerate. The Proton donor role is filled by glutamate 207. Aspartate 244, glutamate 287, and aspartate 314 together coordinate Mg(2+). (2R)-2-phosphoglycerate-binding residues include lysine 339, arginine 368, serine 369, and lysine 390. Catalysis depends on lysine 339, which acts as the Proton acceptor.

It belongs to the enolase family. As to quaternary structure, component of the RNA degradosome, a multiprotein complex involved in RNA processing and mRNA degradation. Mg(2+) is required as a cofactor.

The protein localises to the cytoplasm. The protein resides in the secreted. It localises to the cell surface. It catalyses the reaction (2R)-2-phosphoglycerate = phosphoenolpyruvate + H2O. Its pathway is carbohydrate degradation; glycolysis; pyruvate from D-glyceraldehyde 3-phosphate: step 4/5. Catalyzes the reversible conversion of 2-phosphoglycerate (2-PG) into phosphoenolpyruvate (PEP). It is essential for the degradation of carbohydrates via glycolysis. The chain is Enolase from Francisella tularensis subsp. novicida (strain U112).